Consider the following 103-residue polypeptide: Putative membrane protein insertion efficiency factor (103 aa).

Positions 68 to 103 (HEGGYDPVPLAKQDAKPENNSESESLLNQPTETKSL) are disordered. Residues 87–103 (NSESESLLNQPTETKSL) are compositionally biased toward polar residues.

This sequence belongs to the UPF0161 family.

It is found in the cell inner membrane. In terms of biological role, could be involved in insertion of integral membrane proteins into the membrane. In Idiomarina loihiensis (strain ATCC BAA-735 / DSM 15497 / L2-TR), this protein is Putative membrane protein insertion efficiency factor.